Reading from the N-terminus, the 98-residue chain is NADH-ubiquinone oxidoreductase chain 4L (98 aa).

3 helical membrane-spanning segments follow: residues 1–21, 28–48, and 59–79; these read MTSINLNLTVAFSLALAGVLI, STLLCLEGMMLSLFVMMALLI, and APIILLVFSACEAGVGLALLV.

This sequence belongs to the complex I subunit 4L family. Core subunit of respiratory chain NADH dehydrogenase (Complex I) which is composed of 45 different subunits.

It localises to the mitochondrion inner membrane. The catalysed reaction is a ubiquinone + NADH + 5 H(+)(in) = a ubiquinol + NAD(+) + 4 H(+)(out). Functionally, core subunit of the mitochondrial membrane respiratory chain NADH dehydrogenase (Complex I) which catalyzes electron transfer from NADH through the respiratory chain, using ubiquinone as an electron acceptor. Part of the enzyme membrane arm which is embedded in the lipid bilayer and involved in proton translocation. The protein is NADH-ubiquinone oxidoreductase chain 4L (MT-ND4L) of Trichosurus vulpecula (Brush-tailed possum).